Here is a 250-residue protein sequence, read N- to C-terminus: NADH-quinone oxidoreductase subunit C (250 aa).

It belongs to the complex I 30 kDa subunit family. As to quaternary structure, NDH-1 is composed of 14 different subunits. Subunits NuoB, C, D, E, F, and G constitute the peripheral sector of the complex.

Its subcellular location is the cell inner membrane. The enzyme catalyses a quinone + NADH + 5 H(+)(in) = a quinol + NAD(+) + 4 H(+)(out). Its function is as follows. NDH-1 shuttles electrons from NADH, via FMN and iron-sulfur (Fe-S) centers, to quinones in the respiratory chain. The immediate electron acceptor for the enzyme in this species is believed to be ubiquinone. Couples the redox reaction to proton translocation (for every two electrons transferred, four hydrogen ions are translocated across the cytoplasmic membrane), and thus conserves the redox energy in a proton gradient. The protein is NADH-quinone oxidoreductase subunit C of Xanthomonas oryzae pv. oryzae (strain PXO99A).